Consider the following 293-residue polypeptide: Diaminopimelate epimerase (293 aa).

Residues Asn15, Gln47, and Asn67 each contribute to the substrate site. Cys76 acts as the Proton donor in catalysis. Substrate contacts are provided by residues 77–78 (GN), Asn163, Asn197, and 215–216 (ER). Cys224 acts as the Proton acceptor in catalysis. Position 225–226 (225–226 (GS)) interacts with substrate.

Belongs to the diaminopimelate epimerase family. In terms of assembly, homodimer.

It localises to the cytoplasm. The enzyme catalyses (2S,6S)-2,6-diaminopimelate = meso-2,6-diaminopimelate. It participates in amino-acid biosynthesis; L-lysine biosynthesis via DAP pathway; DL-2,6-diaminopimelate from LL-2,6-diaminopimelate: step 1/1. Catalyzes the stereoinversion of LL-2,6-diaminopimelate (L,L-DAP) to meso-diaminopimelate (meso-DAP), a precursor of L-lysine and an essential component of the bacterial peptidoglycan. The chain is Diaminopimelate epimerase from Chelativorans sp. (strain BNC1).